A 506-amino-acid polypeptide reads, in one-letter code: Maturase K (506 aa).

Belongs to the intron maturase 2 family. MatK subfamily.

The protein localises to the plastid. It localises to the chloroplast. Usually encoded in the trnK tRNA gene intron. Probably assists in splicing its own and other chloroplast group II introns. The protein is Maturase K of Phyllodoce empetriformis (Pink mountainheath).